The sequence spans 275 residues: MGNFRGHALPGTFFFIIGLWWCTKSILKYICKKQKRTCYLGSKTLFYRLEILEGITIVGMALTGMAGEQFIPGGPHLMLYDYKQGHWNQLLGWHHFTMYFFFGLLGVADILCFTISSLPVSLTKLMLSNALFVEAFIFYNHTHGREMLDIFVHQLLVLVVFLTGLVAFLEFLVRNNVLLELLRSSLILLQGSWFFQIGFVLYPPSGGPAWDLMDHENILFLTICFCWHYAVTIVIVGMNYAFITWLVKSRLKRLCSSEVGLLKNAEREQESEEEM.

The next 5 helical transmembrane spans lie at 7–27, 51–71, 100–120, 150–170, and 218–238; these read HALP…KSIL, ILEG…EQFI, FFFG…SLPV, IFVH…AFLE, and ILFL…IVGM.

This sequence belongs to the TMEM45 family.

Its subcellular location is the membrane. This chain is Transmembrane protein 45A (TMEM45A), found in Homo sapiens (Human).